A 365-amino-acid polypeptide reads, in one-letter code: Cobalt-precorrin-5B C(1)-methyltransferase (365 aa).

Belongs to the CbiD family.

It carries out the reaction Co-precorrin-5B + S-adenosyl-L-methionine = Co-precorrin-6A + S-adenosyl-L-homocysteine. It functions in the pathway cofactor biosynthesis; adenosylcobalamin biosynthesis; cob(II)yrinate a,c-diamide from sirohydrochlorin (anaerobic route): step 6/10. In terms of biological role, catalyzes the methylation of C-1 in cobalt-precorrin-5B to form cobalt-precorrin-6A. This Clostridium perfringens (strain 13 / Type A) protein is Cobalt-precorrin-5B C(1)-methyltransferase.